We begin with the raw amino-acid sequence, 601 residues long: Sodium-dependent phosphate transport protein 2C (601 aa).

The Cytoplasmic portion of the chain corresponds to 1–75 (MPNSLAGGQV…RRVVSSFLKA (75 aa)). Ser-4 is subject to Phosphoserine. Residues 76-96 (CGLLGSLYFFICSLDILSSAF) traverse the membrane as a helical segment. The Extracellular portion of the chain corresponds to 97 to 110 (QLLGSKMAGDIFKD). The chain crosses the membrane as a helical span at residues 111-131 (NVVLSNPVAGLVIGVLVTVLV). Over 132 to 187 (QSSSTSSSIVVSMVASKLLTVQVSVPIIMGVNVGTSITSTLVSMAQSGDRDEFQRA) the chain is Cytoplasmic. Residues 188–208 (FSGSAVHGIFNWLTVLVLLPL) traverse the membrane as a helical segment. Residues 209–324 (ESATAALERL…FAGSKLTDLA (116 aa)) are Extracellular-facing. Asn-264, Asn-267, and Asn-299 each carry an N-linked (GlcNAc...) asparagine glycan. The cysteines at positions 275 and 311 are disulfide-linked. Residues 325–345 (VGFILLAGSLLVLCVCLVLIV) traverse the membrane as a helical segment. Over 346-369 (KLLNSVLKGRIAQAVKTVINADFP) the chain is Cytoplasmic. Residues 370 to 390 (FPFGWLSGYLAILVGAGLTFL) traverse the membrane as a helical segment. The Extracellular portion of the chain corresponds to 391 to 441 (LQSSSVFTAAIVPLMGVGVIDLERAYPLFLGSNIGTTTTALLAALASPADM). The chain crosses the membrane as a helical span at residues 442-462 (LIFAVQVALIHFFFNLAGILL). Over 463–487 (WYLVPVLRLPIPLAKRFGNLTAQYR) the chain is Cytoplasmic. A helical membrane pass occupies residues 488–508 (WVAIVYLLLTFLLLPLAAFGL). Residues 509–512 (SLAG) are Extracellular-facing. A helical transmembrane segment spans residues 513 to 533 (GTVLAAVGGPLVGLVLLIILV). Topologically, residues 534–601 (NVLQQHRPSW…NPQVIASQQL (68 aa)) are cytoplasmic.

It belongs to the SLC34A transporter family. Expressed only in the kidney.

It is found in the apical cell membrane. The enzyme catalyses 2 Na(+)(out) + phosphate(out) = 2 Na(+)(in) + phosphate(in). In terms of biological role, involved in actively transporting phosphate into cells via Na(+) cotransport in the renal brush border membrane. The cotransport has a Na(+):Pi stoichiometry of 2:1 and is electroneutral. The chain is Sodium-dependent phosphate transport protein 2C (Slc34a3) from Mus musculus (Mouse).